A 106-amino-acid chain; its full sequence is MAEERINAEQVQHVASLAKLEFTPDQLAMFTPQLEKIIGMFEELSTVDTTGVPVTSRMSDHTNTLREDVAVKSDEALREALLKNAPETANGLIKVPAIIDESGDGE.

The protein belongs to the GatC family. Heterotrimer of A, B and C subunits.

The enzyme catalyses L-glutamyl-tRNA(Gln) + L-glutamine + ATP + H2O = L-glutaminyl-tRNA(Gln) + L-glutamate + ADP + phosphate + H(+). It catalyses the reaction L-aspartyl-tRNA(Asn) + L-glutamine + ATP + H2O = L-asparaginyl-tRNA(Asn) + L-glutamate + ADP + phosphate + 2 H(+). In terms of biological role, allows the formation of correctly charged Asn-tRNA(Asn) or Gln-tRNA(Gln) through the transamidation of misacylated Asp-tRNA(Asn) or Glu-tRNA(Gln) in organisms which lack either or both of asparaginyl-tRNA or glutaminyl-tRNA synthetases. The reaction takes place in the presence of glutamine and ATP through an activated phospho-Asp-tRNA(Asn) or phospho-Glu-tRNA(Gln). In Lactiplantibacillus plantarum (strain ATCC BAA-793 / NCIMB 8826 / WCFS1) (Lactobacillus plantarum), this protein is Aspartyl/glutamyl-tRNA(Asn/Gln) amidotransferase subunit C.